The following is a 565-amino-acid chain: NAD-dependent malic enzyme (565 aa).

Tyr-104 (proton donor) is an active-site residue. NAD(+) is bound at residue Arg-157. Lys-175 (proton acceptor) is an active-site residue. A divalent metal cation is bound by residues Glu-246, Asp-247, and Asp-270. Residues Asp-270 and Asn-418 each contribute to the NAD(+) site.

The protein belongs to the malic enzymes family. Homotetramer. Mg(2+) is required as a cofactor. The cofactor is Mn(2+).

The catalysed reaction is (S)-malate + NAD(+) = pyruvate + CO2 + NADH. It carries out the reaction oxaloacetate + H(+) = pyruvate + CO2. The sequence is that of NAD-dependent malic enzyme from Pectobacterium carotovorum subsp. carotovorum (strain PC1).